Reading from the N-terminus, the 75-residue chain is Acyl carrier protein (75 aa).

In terms of domain architecture, Carrier spans 1–75 (MALFDDVKEV…GDAIKFIENV (75 aa)). Ser-36 carries the post-translational modification O-(pantetheine 4'-phosphoryl)serine.

The protein belongs to the acyl carrier protein (ACP) family. Post-translationally, 4'-phosphopantetheine is transferred from CoA to a specific serine of apo-ACP by AcpS. This modification is essential for activity because fatty acids are bound in thioester linkage to the sulfhydryl of the prosthetic group.

The protein localises to the cytoplasm. It participates in lipid metabolism; fatty acid biosynthesis. In terms of biological role, carrier of the growing fatty acid chain in fatty acid biosynthesis. This is Acyl carrier protein from Sulfurovum sp. (strain NBC37-1).